Here is a 1222-residue protein sequence, read N- to C-terminus: Chitin synthase 4 (1222 aa).

Positions 1-108 (MSLPERPGGI…NRIDKDHPNY (108 aa)) are disordered. The span at 51–68 (LSANSFAETIPSPNNSFV) shows a compositional bias: polar residues. The N-linked (GlcNAc...) asparagine glycan is linked to Asn64. Residues 94 to 107 (IRPERNRIDKDHPN) are compositionally biased toward basic and acidic residues. N-linked (GlcNAc...) asparagine glycosylation is present at Asn116. Residues 136–199 (TTDVSGSRSQ…KSTKKRSTPQ (64 aa)) are disordered. Positions 137 to 154 (TDVSGSRSQTLDGVSDTS) are enriched in polar residues. Basic residues predominate over residues 176 to 196 (SAKRVSRHKSGKITKSTKKRS). Transmembrane regions (helical) follow at residues 204-224 (PPSF…DFML) and 242-262 (MGLI…TFGF). N-linked (GlcNAc...) asparagine glycosylation is found at Asn378 and Asn418. A helical membrane pass occupies residues 509–529 (YVFLALILSVVGSRFVLALIF). The segment at 595 to 662 (RFSTVYGPDR…PPSDGPGPAG (68 aa)) is disordered. The span at 608 to 643 (NKRVPTTMASSGGSGSQLLHPNSMYRQGNDSRSSFL) shows a compositional bias: polar residues. Asn636 and Asn1031 each carry an N-linked (GlcNAc...) asparagine glycan. A run of 3 helical transmembrane segments spans residues 1056–1076 (FIVF…AFTF), 1090–1110 (VIPL…IVIT), and 1116–1136 (YLVW…VLPV). The segment at 1201-1222 (GGGNSWSMPPGHQYHDDYYSDA) is disordered. Residues 1213-1222 (QYHDDYYSDA) are compositionally biased toward basic and acidic residues.

The protein belongs to the chitin synthase family. Class IV subfamily.

Its subcellular location is the cell membrane. The catalysed reaction is [(1-&gt;4)-N-acetyl-beta-D-glucosaminyl](n) + UDP-N-acetyl-alpha-D-glucosamine = [(1-&gt;4)-N-acetyl-beta-D-glucosaminyl](n+1) + UDP + H(+). Its function is as follows. Polymerizes chitin, a structural polymer of the cell wall and septum, by transferring the sugar moiety of UDP-GlcNAc to the non-reducing end of the growing chitin polymer. Plays a role in cell wall integrity and is involved in tolerance to hyperosmotic conditions. Required to successfully penetrate the host plants and thus plays a key role in pathogenicity. The polypeptide is Chitin synthase 4 (Verticillium dahliae (strain VdLs.17 / ATCC MYA-4575 / FGSC 10137) (Verticillium wilt)).